The sequence spans 670 residues: Leucine-rich repeat-containing protein 45 (670 aa).

LRR repeat units follow at residues 58 to 80, 87 to 107, 115 to 136, 145 to 166, 173 to 194, and 201 to 212; these read TLCT…LLLR, VLRF…EALG, SIQS…FATF, ALQR…ELAL, TLQQ…ALMN, and TLWRLDLAGNNI. Positions 252–645 form a coiled coil; sequence REEKSKQFLD…IARIRDEEAQ (394 aa). The residue at position 661 (serine 661) is a Phosphoserine; by NEK2.

Homomer. Interacts with CROCC/rootletin and CEP250. Interacts with CEP44. Interacts with CCDC102B (via N-terminus). Post-translationally, phosphorylated by NEK2 during misosis, phosphorylation reduces centrosomal localization which subsequently leads to centrosome separation.

It is found in the cytoplasm. The protein resides in the cytoskeleton. It localises to the microtubule organizing center. The protein localises to the centrosome. Its function is as follows. Component of the proteinaceous fiber-like linker between two centrioles, required for centrosome cohesion. This chain is Leucine-rich repeat-containing protein 45 (LRRC45), found in Homo sapiens (Human).